Here is a 345-residue protein sequence, read N- to C-terminus: Phosphoribosylformylglycinamidine cyclo-ligase (345 aa).

Belongs to the AIR synthase family.

The protein resides in the cytoplasm. The enzyme catalyses 2-formamido-N(1)-(5-O-phospho-beta-D-ribosyl)acetamidine + ATP = 5-amino-1-(5-phospho-beta-D-ribosyl)imidazole + ADP + phosphate + H(+). It functions in the pathway purine metabolism; IMP biosynthesis via de novo pathway; 5-amino-1-(5-phospho-D-ribosyl)imidazole from N(2)-formyl-N(1)-(5-phospho-D-ribosyl)glycinamide: step 2/2. In Salmonella typhi, this protein is Phosphoribosylformylglycinamidine cyclo-ligase.